Consider the following 860-residue polypeptide: Serine/threonine-protein kinase greatwall (860 aa).

One can recognise a Protein kinase domain in the interval 23-816 (FVLVKPISRG…LKELKDHPFF (794 aa)). ATP-binding positions include 29–37 (ISRGAFGKV) and lysine 52. The Proton acceptor role is filled by aspartate 146. The tract at residues 514-537 (QGEEGGKAEPNSSSSTSPGDERNI) is disordered. Threonine 722 carries the phosphothreonine; by CDK1 modification. Residues 817 to 860 (DGVDWENLHHQTMPFIPQPDNETDTSYFEARNTAQHLTVSGFSL) form the AGC-kinase C-terminal domain.

Belongs to the protein kinase superfamily. AGC Ser/Thr protein kinase family. In terms of processing, phosphorylation at Thr-722 by CDK1 during M phase activates its kinase activity. Maximum phosphorylation occurs in prometaphase.

The protein localises to the cytoplasm. The protein resides in the cytoskeleton. It localises to the microtubule organizing center. Its subcellular location is the centrosome. It is found in the nucleus. The protein localises to the cleavage furrow. The enzyme catalyses L-seryl-[protein] + ATP = O-phospho-L-seryl-[protein] + ADP + H(+). The catalysed reaction is L-threonyl-[protein] + ATP = O-phospho-L-threonyl-[protein] + ADP + H(+). Functionally, serine/threonine kinase that plays a key role in M phase by acting as a regulator of mitosis entry and maintenance. Acts by promoting the inactivation of protein phosphatase 2A (PP2A) during M phase: does not directly inhibit PP2A but acts by mediating phosphorylation and subsequent activation of arpp19 and ensa at 'Ser-62' and 'Ser-74', respectively. ARPP19 and ENSA are phosphatase inhibitors that specifically inhibit the ppp2r2d (PR55-delta) subunit of PP2A. Inactivation of PP2A during M phase is essential to keep cyclin-B1-CDK1 activity high. Following DNA damage, it is also involved in checkpoint recovery by being inhibited. May be involved in megakaryocyte differentiation. This chain is Serine/threonine-protein kinase greatwall (mastl), found in Danio rerio (Zebrafish).